Here is a 267-residue protein sequence, read N- to C-terminus: Hydroxyethylthiazole kinase 2 (267 aa).

A substrate-binding site is contributed by M41. 2 residues coordinate ATP: K116 and T166. G193 serves as a coordination point for substrate.

Belongs to the Thz kinase family. Mg(2+) is required as a cofactor.

It carries out the reaction 5-(2-hydroxyethyl)-4-methylthiazole + ATP = 4-methyl-5-(2-phosphooxyethyl)-thiazole + ADP + H(+). It participates in cofactor biosynthesis; thiamine diphosphate biosynthesis; 4-methyl-5-(2-phosphoethyl)-thiazole from 5-(2-hydroxyethyl)-4-methylthiazole: step 1/1. In terms of biological role, catalyzes the phosphorylation of the hydroxyl group of 4-methyl-5-beta-hydroxyethylthiazole (THZ). The polypeptide is Hydroxyethylthiazole kinase 2 (Streptococcus pneumoniae serotype 4 (strain ATCC BAA-334 / TIGR4)).